Here is a 278-residue protein sequence, read N- to C-terminus: 2-heptyl-3-hydroxy-4-quinolone dioxygenase AqdC1 (278 aa).

One can recognise an AB hydrolase-1 domain in the interval 29–158 (PTIVMLPGWC…GWVDSCRALF (130 aa)). His103 is a substrate binding site. The Proton donor/acceptor role is filled by His250.

It belongs to the AB hydrolase superfamily.

The catalysed reaction is 2-heptyl-3-hydroxy-4(1H)-quinolone + O2 = N-octanoylanthranilate + CO + H(+). In terms of biological role, involved in the degradation of the Pseudomonas aeruginosa quorum sensing signal molecules HHQ (2-heptyl-4-quinolone) and PQS (2-heptyl-3-hydroxy-4-quinolone) to anthranilic acid. Catalyzes the cleavage of PQS to form N-octanoylanthranilic acid and carbon monoxide. This Rhodococcus erythropolis (Arthrobacter picolinophilus) protein is 2-heptyl-3-hydroxy-4-quinolone dioxygenase AqdC1.